The sequence spans 552 residues: Cleavage and polyadenylation specificity factor subunit 6 (552 aa).

The necessary for interaction with NXF1 stretch occupies residues 1–213 (MADGVDHIDI…RGRFPGAVPG (213 aa)). Residues 81 to 161 (IALYIGNLTR…QNPVVTPCNK (81 aa)) enclose the RRM domain. The segment at 81-161 (IALYIGNLTR…QNPVVTPCNK (81 aa)) is necessary for interaction with NUDT21/CPSF5. The interval 81–161 (IALYIGNLTR…QNPVVTPCNK (81 aa)) is necessary for nuclear paraspeckles localization. T157 carries the post-translational modification Phosphothreonine. Residues 169–180 (MQSRKTTQSGQM) show a composition bias toward polar residues. Disordered stretches follow at residues 169–411 (MQSR…PLSE) and 479–552 (GIES…YRHR). The GAR signature appears at 202–206 (RGRGR). Low complexity predominate over residues 207-219 (FPGAVPGGDRFPG). Composition is skewed to pro residues over residues 220 to 265 (PTGP…PLAG), 285 to 366 (GQPP…PPPT), and 377 to 388 (GPPPTDPYGRPP). A compositionally biased stretch (basic and acidic residues) spans 389-404 (PYDRGDYGPPGREMDT). A phosphothreonine mark is found at T404 and T407. Residues 404-552 (TARTPLSEAE…RDREREYRHR (149 aa)) form a sufficient for nuclear speckle localization region. Residues 405 to 552 (ARTPLSEAEF…RDREREYRHR (148 aa)) form a necessary for RNA-binding region. The necessary for interaction with SRSF3, SRSF7 and TRA2B/SFRS10 stretch occupies residues 481–552 (ESKSYGSGSR…RDREREYRHR (72 aa)). The interval 491–552 (RRERSRERDH…RDREREYRHR (62 aa)) is arg/Ser-rich domain. Positions 494 to 504 (RSRERDHSRSR) are enriched in basic and acidic residues. A phosphoserine mark is found at S495, S501, S512, S514, and S526. Residues 505–515 (EKSRRHKSRSR) show a composition bias toward basic residues. The interval 511–552 (KSRSRDRHDDYYRERSRERERHRDRDRDRDRERDREREYRHR) is sufficient for nuclear targeting. Residues 516–552 (DRHDDYYRERSRERERHRDRDRDRDRERDREREYRHR) are compositionally biased toward basic and acidic residues.

It belongs to the RRM CPSF6/7 family. As to quaternary structure, component of the cleavage factor Im (CFIm) complex which is a heterotetramer composed of two subunits of NUDT21/CPSF5 and two subunits of CPSF6 or CPSF7 or a heterodimer of CPSF6 and CPSF7. The cleavage factor Im (CFIm) complex associates with the CPSF and CSTF complexes to promote the assembly of the core mRNA 3'-processing machinery. Associates with the exon junction complex (EJC). Associates with the 80S ribosome particle. Interacts (via the RRM domain) with NUDT21/CPSF5; this interaction is direct and enhances binding to RNA. Interacts (via Arg/Ser-rich domain) with FIP1L1 (preferentially via unphosphorylated form and Arg/Glu/Asp-rich domain); this interaction mediates, at least in part, the interaction between the CFIm and CPSF complexes and may be inhibited by CPSF6 hyper-phosphorylation. Interacts (via N-terminus) with NXF1; this interaction is direct. Interacts with SRSF3. Interacts with SRSF7. Interacts with SNRNP70. Interacts with TRA2B/SFRS10. Interacts with UPF1. Interacts with UPF3B. Interacts with VIRMA. Interacts (via Arg/Ser-rich domain) with TNPO3; promoting nuclear import of CPSF6 independently of its phosphorylation status. Interacts with YTHDC1. Post-translationally, phosphorylated. Phosphorylated in the Arg/Ser-rich domain by SRPK1, in vitro. Symmetrically dimethylated on arginine residues in the GAR motif by PRMT5 in a WDR77- and CLNS1A-dependent manner. Asymmetrically dimethylated on arginine residues in the GAR motif by PRMT1.

The protein resides in the nucleus. It is found in the nucleoplasm. Its subcellular location is the nucleus speckle. It localises to the cytoplasm. Component of the cleavage factor Im (CFIm) complex that functions as an activator of the pre-mRNA 3'-end cleavage and polyadenylation processing required for the maturation of pre-mRNA into functional mRNAs. CFIm contributes to the recruitment of multiprotein complexes on specific sequences on the pre-mRNA 3'-end, so called cleavage and polyadenylation signals (pA signals). Most pre-mRNAs contain multiple pA signals, resulting in alternative cleavage and polyadenylation (APA) producing mRNAs with variable 3'-end formation. The CFIm complex acts as a key regulator of cleavage and polyadenylation site choice during APA through its binding to 5'-UGUA-3' elements localized in the 3'-untranslated region (UTR) for a huge number of pre-mRNAs. CPSF6 enhances NUDT21/CPSF5 binding to 5'-UGUA-3' elements localized upstream of pA signals and promotes RNA looping, and hence activates directly the mRNA 3'-processing machinery. Plays a role in mRNA export. This chain is Cleavage and polyadenylation specificity factor subunit 6, found in Pongo abelii (Sumatran orangutan).